A 483-amino-acid polypeptide reads, in one-letter code: Protein nucleotidyltransferase YdiU (483 aa).

ATP-binding residues include Gly-87, Gly-89, Arg-90, Lys-110, Asp-122, Gly-123, Arg-173, and Arg-180. The active-site Proton acceptor is Asp-249. Mg(2+)-binding residues include Asn-250 and Asp-259. An ATP-binding site is contributed by Asp-259.

Belongs to the SELO family. Mg(2+) is required as a cofactor. Requires Mn(2+) as cofactor.

The catalysed reaction is L-seryl-[protein] + ATP = 3-O-(5'-adenylyl)-L-seryl-[protein] + diphosphate. The enzyme catalyses L-threonyl-[protein] + ATP = 3-O-(5'-adenylyl)-L-threonyl-[protein] + diphosphate. It carries out the reaction L-tyrosyl-[protein] + ATP = O-(5'-adenylyl)-L-tyrosyl-[protein] + diphosphate. It catalyses the reaction L-histidyl-[protein] + UTP = N(tele)-(5'-uridylyl)-L-histidyl-[protein] + diphosphate. The catalysed reaction is L-seryl-[protein] + UTP = O-(5'-uridylyl)-L-seryl-[protein] + diphosphate. The enzyme catalyses L-tyrosyl-[protein] + UTP = O-(5'-uridylyl)-L-tyrosyl-[protein] + diphosphate. In terms of biological role, nucleotidyltransferase involved in the post-translational modification of proteins. It can catalyze the addition of adenosine monophosphate (AMP) or uridine monophosphate (UMP) to a protein, resulting in modifications known as AMPylation and UMPylation. The protein is Protein nucleotidyltransferase YdiU of Pectobacterium carotovorum subsp. carotovorum (strain PC1).